Reading from the N-terminus, the 460-residue chain is UDP-N-acetylmuramate--L-alanine ligase (460 aa).

118-124 lines the ATP pocket; it reads GTHGKTT.

Belongs to the MurCDEF family.

The protein resides in the cytoplasm. The catalysed reaction is UDP-N-acetyl-alpha-D-muramate + L-alanine + ATP = UDP-N-acetyl-alpha-D-muramoyl-L-alanine + ADP + phosphate + H(+). It functions in the pathway cell wall biogenesis; peptidoglycan biosynthesis. Its function is as follows. Cell wall formation. This chain is UDP-N-acetylmuramate--L-alanine ligase, found in Gloeobacter violaceus (strain ATCC 29082 / PCC 7421).